Reading from the N-terminus, the 391-residue chain is MRSNYLFTSESVSEGHPDKVADQISDAIVDLYLSRDPEARVACETLVTTQRIIIGGEVRSAVPVSEEEIEKTVRETVREIGYEQTGFDWRTAEFANHLHAQSADIAQGVDAGEDKDEGAGDQGIMFGFATDETPDYMPATLYYAHRILERLAEDRHQKKVDFLEPDAKSQVTLVYENGVPVRASALVLSTQHSPALSSKEGQAKLRDYVKSVYEDVLPKGWMPDDKAIFVNPTGLFEIGGPDGDAGLTGRKIIVDTYGGAAPHGGGAFSGKDPTKVDRSAAYVARYLAKNIVAAGLAKKVTIQLSYAIGVSEPLSLYVDTHGTGTVDEAKIEEVLPKLIRLTPKGIRTHLKLNKPIYKPSAAYGHFGRKADGDFFPWEKLDLVDKLKAAFA.

Histidine 16 provides a ligand contact to ATP. Residue aspartate 18 participates in Mg(2+) binding. Glutamate 44 is a K(+) binding site. Positions 57 and 101 each coordinate L-methionine. Residues glutamine 101 to alanine 111 are flexible loop. ATP-binding positions include aspartate 166–lysine 168, aspartate 244, arginine 250–lysine 251, alanine 267, and lysine 271. Residue aspartate 244 participates in L-methionine binding. Residue lysine 275 coordinates L-methionine.

Belongs to the AdoMet synthase family. Homotetramer; dimer of dimers. Mg(2+) is required as a cofactor. The cofactor is K(+).

The protein resides in the cytoplasm. It catalyses the reaction L-methionine + ATP + H2O = S-adenosyl-L-methionine + phosphate + diphosphate. The protein operates within amino-acid biosynthesis; S-adenosyl-L-methionine biosynthesis; S-adenosyl-L-methionine from L-methionine: step 1/1. Functionally, catalyzes the formation of S-adenosylmethionine (AdoMet) from methionine and ATP. The overall synthetic reaction is composed of two sequential steps, AdoMet formation and the subsequent tripolyphosphate hydrolysis which occurs prior to release of AdoMet from the enzyme. This Zymomonas mobilis subsp. mobilis (strain ATCC 31821 / ZM4 / CP4) protein is S-adenosylmethionine synthase.